A 273-amino-acid polypeptide reads, in one-letter code: Ribosomal RNA small subunit methyltransferase I (273 aa).

The protein belongs to the methyltransferase superfamily. RsmI family.

It localises to the cytoplasm. It carries out the reaction cytidine(1402) in 16S rRNA + S-adenosyl-L-methionine = 2'-O-methylcytidine(1402) in 16S rRNA + S-adenosyl-L-homocysteine + H(+). Catalyzes the 2'-O-methylation of the ribose of cytidine 1402 (C1402) in 16S rRNA. This chain is Ribosomal RNA small subunit methyltransferase I, found in Xylella fastidiosa (strain Temecula1 / ATCC 700964).